The following is a 343-amino-acid chain: Phosphate acyltransferase (343 aa).

It belongs to the PlsX family. As to quaternary structure, homodimer. Probably interacts with PlsY.

It is found in the cytoplasm. The catalysed reaction is a fatty acyl-[ACP] + phosphate = an acyl phosphate + holo-[ACP]. It participates in lipid metabolism; phospholipid metabolism. Its function is as follows. Catalyzes the reversible formation of acyl-phosphate (acyl-PO(4)) from acyl-[acyl-carrier-protein] (acyl-ACP). This enzyme utilizes acyl-ACP as fatty acyl donor, but not acyl-CoA. This chain is Phosphate acyltransferase, found in Limosilactobacillus reuteri (strain DSM 20016) (Lactobacillus reuteri).